Reading from the N-terminus, the 295-residue chain is 33 kDa chaperonin (295 aa).

Disulfide bonds link Cys-238–Cys-240 and Cys-271–Cys-274.

This sequence belongs to the HSP33 family. Post-translationally, under oxidizing conditions two disulfide bonds are formed involving the reactive cysteines. Under reducing conditions zinc is bound to the reactive cysteines and the protein is inactive.

The protein resides in the cytoplasm. Redox regulated molecular chaperone. Protects both thermally unfolding and oxidatively damaged proteins from irreversible aggregation. Plays an important role in the bacterial defense system toward oxidative stress. The chain is 33 kDa chaperonin from Levilactobacillus brevis (strain ATCC 367 / BCRC 12310 / CIP 105137 / JCM 1170 / LMG 11437 / NCIMB 947 / NCTC 947) (Lactobacillus brevis).